The chain runs to 73 residues: Venom peptide La1 (73 aa).

Lysine amide is present on Lys-73.

Belongs to the scorpion La1-like peptide family. Contains 4 disulfide bonds. Expressed by the venom gland.

It is found in the secreted. Functionally, not toxic to insect. The polypeptide is Venom peptide La1 (Liocheles australasiae (Dwarf wood scorpion)).